The chain runs to 425 residues: UPF0597 protein UNCMA_16400 (425 aa).

Belongs to the UPF0597 family.

The protein is UPF0597 protein UNCMA_16400 of Methanocella arvoryzae (strain DSM 22066 / NBRC 105507 / MRE50).